Reading from the N-terminus, the 453-residue chain is Methionine aminopeptidase 2-1 (453 aa).

Over residues 1 to 12 (MGSKTPDGHRQS) the composition is skewed to basic and acidic residues. The segment at 1-101 (MGSKTPDGHR…TTPPRVPLST (101 aa)) is disordered. Residues 46-57 (GEDDDDDDENEE) are compositionally biased toward acidic residues. Residues 67–82 (KKKKRKKSKKKNKKSK) are compositionally biased toward basic residues. His210 lines the substrate pocket. Asp231, Asp242, and His306 together coordinate a divalent metal cation. A substrate-binding site is contributed by His314. Residues Glu339 and Glu434 each contribute to the a divalent metal cation site.

This sequence belongs to the peptidase M24A family. Methionine aminopeptidase eukaryotic type 2 subfamily. Requires Co(2+) as cofactor. The cofactor is Zn(2+). Mn(2+) is required as a cofactor. It depends on Fe(2+) as a cofactor.

The protein localises to the cytoplasm. It catalyses the reaction Release of N-terminal amino acids, preferentially methionine, from peptides and arylamides.. Its function is as follows. Cotranslationally removes the N-terminal methionine from nascent proteins. The N-terminal methionine is often cleaved when the second residue in the primary sequence is small and uncharged (Met-Ala-, Cys, Gly, Pro, Ser, Thr, or Val). In Aspergillus terreus (strain NIH 2624 / FGSC A1156), this protein is Methionine aminopeptidase 2-1.